Reading from the N-terminus, the 80-residue chain is Putative defensin-like protein 15 (80 aa).

Positions 1–29 (MAKFASIITFIYAALVLFAAFEVPTMVEA) are cleaved as a signal peptide. The residue at position 30 (Q30) is a Pyrrolidone carboxylic acid. Disulfide bonds link C33-C80, C44-C65, C50-C74, and C54-C76.

The protein belongs to the DEFL family.

It is found in the secreted. Its function is as follows. Confers broad-spectrum resistance to pathogens. The sequence is that of Putative defensin-like protein 15 (PDF1.2B) from Arabidopsis thaliana (Mouse-ear cress).